The following is a 97-amino-acid chain: Aspartyl/glutamyl-tRNA(Asn/Gln) amidotransferase subunit C (97 aa).

Belongs to the GatC family. As to quaternary structure, heterotrimer of A, B and C subunits.

The enzyme catalyses L-glutamyl-tRNA(Gln) + L-glutamine + ATP + H2O = L-glutaminyl-tRNA(Gln) + L-glutamate + ADP + phosphate + H(+). It carries out the reaction L-aspartyl-tRNA(Asn) + L-glutamine + ATP + H2O = L-asparaginyl-tRNA(Asn) + L-glutamate + ADP + phosphate + 2 H(+). Its function is as follows. Allows the formation of correctly charged Asn-tRNA(Asn) or Gln-tRNA(Gln) through the transamidation of misacylated Asp-tRNA(Asn) or Glu-tRNA(Gln) in organisms which lack either or both of asparaginyl-tRNA or glutaminyl-tRNA synthetases. The reaction takes place in the presence of glutamine and ATP through an activated phospho-Asp-tRNA(Asn) or phospho-Glu-tRNA(Gln). The polypeptide is Aspartyl/glutamyl-tRNA(Asn/Gln) amidotransferase subunit C (Listeria welshimeri serovar 6b (strain ATCC 35897 / DSM 20650 / CCUG 15529 / CIP 8149 / NCTC 11857 / SLCC 5334 / V8)).